The sequence spans 431 residues: Serine hydroxymethyltransferase (431 aa).

(6S)-5,6,7,8-tetrahydrofolate is bound by residues leucine 128 and 132-134; that span reads GHL. Position 237 is an N6-(pyridoxal phosphate)lysine (lysine 237).

The protein belongs to the SHMT family. As to quaternary structure, homodimer. Pyridoxal 5'-phosphate serves as cofactor.

The protein resides in the cytoplasm. It catalyses the reaction (6R)-5,10-methylene-5,6,7,8-tetrahydrofolate + glycine + H2O = (6S)-5,6,7,8-tetrahydrofolate + L-serine. It participates in one-carbon metabolism; tetrahydrofolate interconversion. Its pathway is amino-acid biosynthesis; glycine biosynthesis; glycine from L-serine: step 1/1. In terms of biological role, catalyzes the reversible interconversion of serine and glycine with tetrahydrofolate (THF) serving as the one-carbon carrier. This reaction serves as the major source of one-carbon groups required for the biosynthesis of purines, thymidylate, methionine, and other important biomolecules. Also exhibits THF-independent aldolase activity toward beta-hydroxyamino acids, producing glycine and aldehydes, via a retro-aldol mechanism. This Ruegeria pomeroyi (strain ATCC 700808 / DSM 15171 / DSS-3) (Silicibacter pomeroyi) protein is Serine hydroxymethyltransferase.